We begin with the raw amino-acid sequence, 574 residues long: MNPGAARTPALRILALGALLWPAARPWELTILHTNDVHSRLEQTSEDSSKCVNASRCVGGVARLATKVHQIRRAEPHVLLLDAGDQYQGTIWFTVYKGTEVAHFMNALGYDAMALGNHEFDNGVEGLIDPLLKEVNFPILSANIKAKGPLASKISGLYSPYKILTVGDEVVGIVGYTSKETPFLSNPGTNLVFEDEITALQPEVDKLKTLNVNKIIALGHSGFEVDKLIAQKVKGVDVVVGGHSNTFLYTGNPPSKEVPAGQYPFIVTSDDGRKVPVVQAYAFGKYLGYLKVEFDEKGNVVTSHGNPILLNSSIPEDPNIKADINKWRVKLDNYSTQELGKTIVYLDGTAQSCRFRECNMGNLICDAMINNNLRHPDEMSWNHVSMCILNGGGIRSPIDERNNGTITWENLAAVLPFGGTFDLVQLKGSTLKKAFEHSVHRYGQATGEFLQVGGIHVVYDISRNPGDRVVKLEVLCTQCRVPSYEPLRMDKVYKVILPSFLVSGGDGFQMIKDEKIKHDSGDQDINVVSGYISKMKVLYPAVEGRIQFSAGSHCCGSFSLIFLSVLAVIIILYQ.

An N-terminal signal peptide occupies residues 1–26 (MNPGAARTPALRILALGALLWPAARP). The Zn(2+) site is built by D36 and H38. The cysteines at positions 51 and 57 are disulfide-linked. N53 carries N-linked (GlcNAc...) asparagine glycosylation. Zn(2+) is bound by residues D85, N117, H220, and H243. N-linked (GlcNAc...) asparagine glycosylation is found at N311 and N333. Cystine bridges form between C353-C358 and C365-C387. Residue R354 coordinates AMP. An IMP-binding site is contributed by R354. 2 residues coordinate AMP: N390 and R395. IMP-binding residues include N390 and R395. A glycan (N-linked (GlcNAc...) asparagine) is linked at N403. AMP is bound at residue F417. F417 is a binding site for IMP. Residues C476 and C479 are joined by a disulfide bond. 2 residues coordinate AMP: F500 and D506. 2 residues coordinate IMP: F500 and D506. S549 is lipidated: GPI-anchor amidated serine. A propeptide spans 550-574 (AGSHCCGSFSLIFLSVLAVIIILYQ) (removed in mature form).

It belongs to the 5'-nucleotidase family. As to quaternary structure, homodimer. The cofactor is Zn(2+).

The protein resides in the cell membrane. It carries out the reaction a ribonucleoside 5'-phosphate + H2O = a ribonucleoside + phosphate. The catalysed reaction is a 2'-deoxyribonucleoside 5'-phosphate + H2O = a 2'-deoxyribonucleoside + phosphate. The enzyme catalyses dTMP + H2O = thymidine + phosphate. It catalyses the reaction CMP + H2O = cytidine + phosphate. It carries out the reaction IMP + H2O = inosine + phosphate. The catalysed reaction is AMP + H2O = adenosine + phosphate. The enzyme catalyses GMP + H2O = guanosine + phosphate. It catalyses the reaction UMP + H2O = uridine + phosphate. It carries out the reaction dAMP + H2O = 2'-deoxyadenosine + phosphate. The catalysed reaction is dCMP + H2O = 2'-deoxycytidine + phosphate. Catalyzes the hydrolysis of nucleotide monophosphates, releasing inorganic phosphate and the corresponding nucleoside, with AMP being the preferred substrate. Shows a preference for ribonucleotide monophosphates over their equivalent deoxyribose forms. Other substrates include IMP, UMP, GMP, CMP, dAMP, dCMP, dTMP, NAD and NMN. This Bos taurus (Bovine) protein is 5'-nucleotidase (NT5E).